The chain runs to 100 residues: Urease subunit gamma (100 aa).

This sequence belongs to the urease gamma subunit family. Heterotrimer of UreA (gamma), UreB (beta) and UreC (alpha) subunits. Three heterotrimers associate to form the active enzyme.

Its subcellular location is the cytoplasm. The catalysed reaction is urea + 2 H2O + H(+) = hydrogencarbonate + 2 NH4(+). It functions in the pathway nitrogen metabolism; urea degradation; CO(2) and NH(3) from urea (urease route): step 1/1. The sequence is that of Urease subunit gamma from Synechocystis sp. (strain ATCC 27184 / PCC 6803 / Kazusa).